Reading from the N-terminus, the 775-residue chain is Mitochondrial intermediate peptidase (775 aa).

A mitochondrion-targeting transit peptide spans 1 to 28 (MIARPARDVLSSATKKQFRFRGCLAARH). His-558 lines the Zn(2+) pocket. Residue Glu-559 is part of the active site. Residues His-562 and His-565 each contribute to the Zn(2+) site.

Belongs to the peptidase M3 family. Zn(2+) serves as cofactor.

The protein localises to the mitochondrion matrix. It carries out the reaction Release of an N-terminal octapeptide as second stage of processing of some proteins imported into the mitochondrion.. Cleaves proteins, imported into the mitochondrion, to their mature size. While most mitochondrial precursor proteins are processed to the mature form in one step by mitochondrial processing peptidase (MPP), the sequential cleavage by MIP of an octapeptide after initial processing by MPP is a required step for a subgroup of nuclear-encoded precursor proteins destined for the matrix or the inner membrane. The polypeptide is Mitochondrial intermediate peptidase (OCT1) (Schizophyllum commune (Split gill fungus)).